Here is a 209-residue protein sequence, read N- to C-terminus: Uracil phosphoribosyltransferase (209 aa).

5-phospho-alpha-D-ribose 1-diphosphate-binding positions include Arg-77, Arg-102, and 129 to 137; that span reads DPMLATGVS. Uracil contacts are provided by residues Ile-192 and 197–199; that span reads GDA. Position 198 (Asp-198) interacts with 5-phospho-alpha-D-ribose 1-diphosphate.

Belongs to the UPRTase family. Mg(2+) serves as cofactor.

It carries out the reaction UMP + diphosphate = 5-phospho-alpha-D-ribose 1-diphosphate + uracil. Its pathway is pyrimidine metabolism; UMP biosynthesis via salvage pathway; UMP from uracil: step 1/1. Its activity is regulated as follows. Allosterically activated by GTP. Catalyzes the conversion of uracil and 5-phospho-alpha-D-ribose 1-diphosphate (PRPP) to UMP and diphosphate. In Metamycoplasma arthritidis (strain 158L3-1) (Mycoplasma arthritidis), this protein is Uracil phosphoribosyltransferase.